A 338-amino-acid chain; its full sequence is tRNA N6-adenosine threonylcarbamoyltransferase (338 aa).

Fe cation-binding residues include His-111 and His-115. Substrate is bound by residues 134–138 (LLSGG), Asp-167, Gly-180, and Asn-275. Fe cation is bound at residue Asp-304.

This sequence belongs to the KAE1 / TsaD family. It depends on Fe(2+) as a cofactor.

It is found in the cytoplasm. It carries out the reaction L-threonylcarbamoyladenylate + adenosine(37) in tRNA = N(6)-L-threonylcarbamoyladenosine(37) in tRNA + AMP + H(+). In terms of biological role, required for the formation of a threonylcarbamoyl group on adenosine at position 37 (t(6)A37) in tRNAs that read codons beginning with adenine. Is involved in the transfer of the threonylcarbamoyl moiety of threonylcarbamoyl-AMP (TC-AMP) to the N6 group of A37, together with TsaE and TsaB. TsaD likely plays a direct catalytic role in this reaction. This Leptospira borgpetersenii serovar Hardjo-bovis (strain JB197) protein is tRNA N6-adenosine threonylcarbamoyltransferase.